The chain runs to 1443 residues: DNA polymerase III PolC-type (1443 aa).

The Exonuclease domain maps to 408–567 (FVIFDIETTG…YDTQALKKVF (160 aa)).

This sequence belongs to the DNA polymerase type-C family. PolC subfamily.

The protein localises to the cytoplasm. It catalyses the reaction DNA(n) + a 2'-deoxyribonucleoside 5'-triphosphate = DNA(n+1) + diphosphate. Required for replicative DNA synthesis. This DNA polymerase also exhibits 3' to 5' exonuclease activity. This Mycoplasma pneumoniae (strain ATCC 29342 / M129 / Subtype 1) (Mycoplasmoides pneumoniae) protein is DNA polymerase III PolC-type.